Consider the following 160-residue polypeptide: MASGIARGRLAEERKSWRKNHPHGFVAKPETGQDGTVNLMVWHCTIPGKAGTDWEGGFFPLTMHFSEDYPSKPPKCKFPQGFFHPNVYPSGTVCLSILNEDYGWRPAITVKQILVGIQDLLDTPNPADPAQTDGYHLFCQDPVEYKKRVKLQSKQYPALV.

Position 2 is an N-acetylalanine (Ala2). A UBC core domain is found at 5-158 (IARGRLAEER…VKLQSKQYPA (154 aa)). Cys94 functions as the Glycyl thioester intermediate in the catalytic mechanism.

The protein belongs to the ubiquitin-conjugating enzyme family. In terms of assembly, interacts with SIZ1 (via PHD domain) and MMS21. Interacts with TCP14 and TCP15. Interacts with KIN10.

It participates in protein modification; protein sumoylation. SUMO-conjugating enzyme that accepts the SUMO proteins from the E1 SUMO-activating heterodimer SAE1/SAE2 and catalyzes its covalent attachment to other proteins with the E3 SUMO ligases SIZ1 and MMS21. Associates with SIZ1 for sumoylation of the transcription factor GTE3. The sequence is that of SUMO-conjugating enzyme SCE1 (SCE1) from Arabidopsis thaliana (Mouse-ear cress).